Consider the following 221-residue polypeptide: Putative 3-methyladenine DNA glycosylase (221 aa).

The protein belongs to the DNA glycosylase MPG family.

In Herpetosiphon aurantiacus (strain ATCC 23779 / DSM 785 / 114-95), this protein is Putative 3-methyladenine DNA glycosylase.